A 139-amino-acid polypeptide reads, in one-letter code: Nuclear transcription factor Y subunit B-4 (139 aa).

A DNA-binding region spans residues 8 to 14; sequence LPIANVG. The subunit association domain (SAD) stretch occupies residues 35-46; the sequence is VQECATEFISFV. The segment covering 90–115 has biased composition (basic and acidic residues); that stretch reads YREAERERTEHNKGSNDSGNEKETNT. Positions 90–139 are disordered; the sequence is YREAERERTEHNKGSNDSGNEKETNTRSDVQNQSTKFIRVVEKGSSSSAR. A compositionally biased stretch (polar residues) spans 116–125; the sequence is RSDVQNQSTK.

Belongs to the NFYB/HAP3 subunit family. In terms of assembly, heterotrimeric transcription factor composed of three components, NF-YA, NF-YB and NF-YC. NF-YB and NF-YC must interact and dimerize for NF-YA association and DNA binding. Expressed in flowers, siliques and young rosettes.

The protein resides in the nucleus. Its function is as follows. Component of the NF-Y/HAP transcription factor complex. The NF-Y complex stimulates the transcription of various genes by recognizing and binding to a CCAAT motif in promoters. This Arabidopsis thaliana (Mouse-ear cress) protein is Nuclear transcription factor Y subunit B-4 (NFYB4).